The chain runs to 147 residues: Peptide methionine sulfoxide reductase MsrA (147 aa).

Residue Cys-10 is part of the active site.

Belongs to the MsrA Met sulfoxide reductase family.

The catalysed reaction is L-methionyl-[protein] + [thioredoxin]-disulfide + H2O = L-methionyl-(S)-S-oxide-[protein] + [thioredoxin]-dithiol. It catalyses the reaction [thioredoxin]-disulfide + L-methionine + H2O = L-methionine (S)-S-oxide + [thioredoxin]-dithiol. Has an important function as a repair enzyme for proteins that have been inactivated by oxidation. Catalyzes the reversible oxidation-reduction of methionine sulfoxide in proteins to methionine. This Pelagibacter ubique (strain HTCC1062) protein is Peptide methionine sulfoxide reductase MsrA.